The primary structure comprises 274 residues: MTLQEDIIRQLEVKAVIDPKQEIRQSVDFLKAYLLKHPFLKTYVLGISGGQDSSLAGKLAQMAIEELRAETGDEQYQFIAVRLPYGVQADEADAQKALAFIQPDQALTVNIKEAVDGQLRALEAAGLEISDFNKGNIKARQRMISQYAIAGQTAGAVIGTDHAAENVTGFFTKFGDGGADILPLFRLTKRQGKALLKVLKADPSLYEKVPTADLEDKKPGLADEVALGVTYQEIDDYLEGHTISAEAQARIEDWWHKGQHKRHLPITIFDDFWK.

Residue 46 to 53 (GISGGQDS) participates in ATP binding. Aspartate 52 is a Mg(2+) binding site. Position 140 (arginine 140) interacts with deamido-NAD(+). Position 160 (threonine 160) interacts with ATP. Glutamate 165 provides a ligand contact to Mg(2+). Deamido-NAD(+) contacts are provided by lysine 173 and aspartate 180. ATP contacts are provided by lysine 189 and threonine 211. 260 to 261 (HK) is a binding site for deamido-NAD(+).

It belongs to the NAD synthetase family. Homodimer.

The catalysed reaction is deamido-NAD(+) + NH4(+) + ATP = AMP + diphosphate + NAD(+) + H(+). The protein operates within cofactor biosynthesis; NAD(+) biosynthesis; NAD(+) from deamido-NAD(+) (ammonia route): step 1/1. Catalyzes the ATP-dependent amidation of deamido-NAD to form NAD. Uses ammonia as a nitrogen source. The sequence is that of NH(3)-dependent NAD(+) synthetase from Streptococcus equi subsp. equi (strain 4047).